The primary structure comprises 131 residues: D-ribose pyranase (131 aa).

The active-site Proton donor is the His20. Substrate is bound by residues Asp28, His98, and 120-122 (YAN).

This sequence belongs to the RbsD / FucU family. RbsD subfamily. Homodecamer.

It localises to the cytoplasm. The catalysed reaction is beta-D-ribopyranose = beta-D-ribofuranose. The protein operates within carbohydrate metabolism; D-ribose degradation; D-ribose 5-phosphate from beta-D-ribopyranose: step 1/2. Catalyzes the interconversion of beta-pyran and beta-furan forms of D-ribose. The protein is D-ribose pyranase of Bacillus cereus (strain 03BB102).